Consider the following 994-residue polypeptide: Pre-mRNA-processing ATP-dependent RNA helicase PRP5 (994 aa).

The segment covering 1 to 18 (MTLPSGDSSITNNTNQTL) has biased composition (polar residues). Disordered stretches follow at residues 1-105 (MTLP…SLEE), 170-190 (FVNE…EEEF), and 235-275 (SESF…EQEQ). Composition is skewed to basic and acidic residues over residues 20–32 (EDEK…EKLA) and 70–79 (TTKRNEKQKV). Residues 20 to 87 (EDEKRRLRRE…KVENSFAKLN (68 aa)) adopt a coiled-coil conformation. Polar residues predominate over residues 84–102 (AKLNSTSIDHSSTETQATS). A compositionally biased stretch (basic and acidic residues) spans 172–181 (NEDKEGGGGK). Coiled coils occupy residues 217 to 284 (VLEE…RYLA) and 310 to 382 (DDED…GKNV). Positions 235–245 (SESFVDNNNGG) are enriched in polar residues. The Q motif motif lies at 387 to 416 (LTWGQLLMPESVMSVIQNDLGFAKPSPIQC). Residues 419-597 (IPIVLSGRDM…KKVLHNPIEI (179 aa)) form the Helicase ATP-binding domain. 432–439 (AKTGSGKT) is an ATP binding site. The DEAD box signature appears at 545-548 (DEAD). Residues 629–780 (KLEDILSRFF…AVDSKLQEIA (152 aa)) form the Helicase C-terminal domain. Residues 842 to 867 (YFGSSSSSSSFPSSSNTTTTTTTTST) are disordered. The span at 845–867 (SSSSSSSFPSSSNTTTTTTTTST) shows a compositional bias: low complexity.

The protein belongs to the DEAD box helicase family. DDX46/PRP5 subfamily.

It is found in the nucleus. It carries out the reaction ATP + H2O = ADP + phosphate + H(+). Functionally, ATP-dependent RNA helicase involved spliceosome assembly and in nuclear splicing. Catalyzes an ATP-dependent conformational change of U2 snRNP. Bridges U1 and U2 snRNPs and enables stable U2 snRNP association with intron RNA. The chain is Pre-mRNA-processing ATP-dependent RNA helicase PRP5 (PRP5) from Lodderomyces elongisporus (strain ATCC 11503 / CBS 2605 / JCM 1781 / NBRC 1676 / NRRL YB-4239) (Yeast).